Consider the following 177-residue polypeptide: Peptide methionine sulfoxide reductase MsrA (177 aa).

C11 is an active-site residue.

Belongs to the MsrA Met sulfoxide reductase family.

The enzyme catalyses L-methionyl-[protein] + [thioredoxin]-disulfide + H2O = L-methionyl-(S)-S-oxide-[protein] + [thioredoxin]-dithiol. It carries out the reaction [thioredoxin]-disulfide + L-methionine + H2O = L-methionine (S)-S-oxide + [thioredoxin]-dithiol. In terms of biological role, has an important function as a repair enzyme for proteins that have been inactivated by oxidation. Catalyzes the reversible oxidation-reduction of methionine sulfoxide in proteins to methionine. This Trichodesmium erythraeum (strain IMS101) protein is Peptide methionine sulfoxide reductase MsrA.